The chain runs to 189 residues: Translation initiation factor IF-3 (189 aa).

It belongs to the IF-3 family. In terms of assembly, monomer.

The protein resides in the cytoplasm. In terms of biological role, IF-3 binds to the 30S ribosomal subunit and shifts the equilibrium between 70S ribosomes and their 50S and 30S subunits in favor of the free subunits, thus enhancing the availability of 30S subunits on which protein synthesis initiation begins. The chain is Translation initiation factor IF-3 from Corynebacterium glutamicum (strain R).